We begin with the raw amino-acid sequence, 376 residues long: Chaperone protein DnaJ (376 aa).

The J domain maps to 5 to 70; it reads DFYEVLGVER…SKRAAYDQYG (66 aa). The segment at 135–213 adopts a CR-type zinc-finger fold; sequence GTTVTIRVPT…CHGQGRVEEQ (79 aa). Zn(2+) is bound by residues Cys148, Cys151, Cys165, Cys168, Cys187, Cys190, Cys201, and Cys204. CXXCXGXG motif repeat units lie at residues 148–155, 165–172, 187–194, and 201–208; these read CKTCDGSG, CTTCGGIG, CPRCHGSG, and CGSCHGQG.

Belongs to the DnaJ family. In terms of assembly, homodimer. Zn(2+) serves as cofactor.

It localises to the cytoplasm. Participates actively in the response to hyperosmotic and heat shock by preventing the aggregation of stress-denatured proteins and by disaggregating proteins, also in an autonomous, DnaK-independent fashion. Unfolded proteins bind initially to DnaJ; upon interaction with the DnaJ-bound protein, DnaK hydrolyzes its bound ATP, resulting in the formation of a stable complex. GrpE releases ADP from DnaK; ATP binding to DnaK triggers the release of the substrate protein, thus completing the reaction cycle. Several rounds of ATP-dependent interactions between DnaJ, DnaK and GrpE are required for fully efficient folding. Also involved, together with DnaK and GrpE, in the DNA replication of plasmids through activation of initiation proteins. The polypeptide is Chaperone protein DnaJ (Stutzerimonas stutzeri (Pseudomonas stutzeri)).